The sequence spans 362 residues: tRNA-specific 2-thiouridylase MnmA 1 (362 aa).

ATP is bound by residues 29–36 and methionine 55; that span reads AMSGGVDS. The active-site Nucleophile is cysteine 109. Cysteine 109 and cysteine 201 are oxidised to a cystine. An ATP-binding site is contributed by glycine 133. The tract at residues 151–153 is interaction with tRNA; the sequence is KDQ. The active-site Cysteine persulfide intermediate is cysteine 201.

This sequence belongs to the MnmA/TRMU family.

The protein localises to the cytoplasm. It catalyses the reaction S-sulfanyl-L-cysteinyl-[protein] + uridine(34) in tRNA + AH2 + ATP = 2-thiouridine(34) in tRNA + L-cysteinyl-[protein] + A + AMP + diphosphate + H(+). Functionally, catalyzes the 2-thiolation of uridine at the wobble position (U34) of tRNA, leading to the formation of s(2)U34. The protein is tRNA-specific 2-thiouridylase MnmA 1 of Fusobacterium nucleatum subsp. nucleatum (strain ATCC 25586 / DSM 15643 / BCRC 10681 / CIP 101130 / JCM 8532 / KCTC 2640 / LMG 13131 / VPI 4355).